Reading from the N-terminus, the 488-residue chain is MTQDVEMKEQAAPPSNSLSSTAPSIFHHLKEIASLIETGAYAREVRRISRAVRLTMALRKKLKASSLSAFLNYVLVPGSEVHSRLSSFLPKEDEQDMEVDTATSGAQAPIKNPLPELEIYCYLLVLIFLIDQKKYNEAKACSSASIARLKTVNRRTVDVLASRLYFYYSLCYELTGDLAEIRGYLLALHRIATLRHDELGQETLLNLLLRNYLHYNLYDQAEKLRSKAPRFEAHSNQQFSRYLFYLGKIRTIQLEYTDAKESLLQAARKAPQAALGFRVQCNKWAIIVRLLLGEIPERTVFMQKGMEKALRPYFELTNAVRIGDLELFRKVAEKFSSTFSSDGTNNLIVRLRHNVIRTGLRNISISYSRISLVDVAKKLRLDSPNPVADAESIVSKAIRDGAIDATLDHANGWMVSKETGDIYSTNEPQIAFNSRIAFCLNMHNEAVRALRFPPNSHKEKESAEKRRERQQQEQELAKHIAEEDDDDF.

The disordered stretch occupies residues 1 to 20 (MTQDVEMKEQAAPPSNSLSS). Positions 240–421 (SRYLFYLGKI…GWMVSKETGD (182 aa)) constitute a PCI domain. Residues 452 to 488 (FPPNSHKEKESAEKRRERQQQEQELAKHIAEEDDDDF) form a disordered region. Residues 456–481 (SHKEKESAEKRRERQQQEQELAKHIA) show a composition bias toward basic and acidic residues.

Belongs to the proteasome subunit S3 family. In terms of assembly, the 26S proteasome is composed of a core protease, known as the 20S proteasome, capped at one or both ends by the 19S regulatory complex (RC). The RC is composed of at least 18 different subunits in two subcomplexes, the base and the lid, which form the portions proximal and distal to the 20S proteolytic core, respectively.

The protein resides in the nucleus. Acts as a regulatory subunit of the 26 proteasome which is involved in the ATP-dependent degradation of ubiquitinated proteins. This is Probable 26S proteasome non-ATPase regulatory subunit 3 (21D7) from Nicotiana tabacum (Common tobacco).